Here is a 238-residue protein sequence, read N- to C-terminus: Histone H1 (238 aa).

Composition is skewed to low complexity over residues Ala21–Pro34 and Ala123–Lys132. 2 disordered regions span residues Ala21–Ser57 and Ala123–Lys238. One can recognise an H15 domain in the interval Ala54–Lys124. The segment covering Thr133 to Ala197 has biased composition (basic residues). Composition is skewed to low complexity over residues Lys198–Lys208 and Lys217–Lys230.

This sequence belongs to the histone H1/H5 family.

It is found in the nucleus. Its subcellular location is the chromosome. Histones H1 are necessary for the condensation of nucleosome chains into higher-order structures. This chain is Histone H1, found in Triticum aestivum (Wheat).